The following is a 379-amino-acid chain: UDP-N-acetylglucosamine--N-acetylmuramyl-(pentapeptide) pyrophosphoryl-undecaprenol N-acetylglucosamine transferase (379 aa).

UDP-N-acetyl-alpha-D-glucosamine-binding positions include 19–21, Asn133, Arg174, Ser207, Ile261, and Gln306; that span reads TGG.

Belongs to the glycosyltransferase 28 family. MurG subfamily.

Its subcellular location is the cell inner membrane. It carries out the reaction di-trans,octa-cis-undecaprenyl diphospho-N-acetyl-alpha-D-muramoyl-L-alanyl-D-glutamyl-meso-2,6-diaminopimeloyl-D-alanyl-D-alanine + UDP-N-acetyl-alpha-D-glucosamine = di-trans,octa-cis-undecaprenyl diphospho-[N-acetyl-alpha-D-glucosaminyl-(1-&gt;4)]-N-acetyl-alpha-D-muramoyl-L-alanyl-D-glutamyl-meso-2,6-diaminopimeloyl-D-alanyl-D-alanine + UDP + H(+). It participates in cell wall biogenesis; peptidoglycan biosynthesis. Its function is as follows. Cell wall formation. Catalyzes the transfer of a GlcNAc subunit on undecaprenyl-pyrophosphoryl-MurNAc-pentapeptide (lipid intermediate I) to form undecaprenyl-pyrophosphoryl-MurNAc-(pentapeptide)GlcNAc (lipid intermediate II). This is UDP-N-acetylglucosamine--N-acetylmuramyl-(pentapeptide) pyrophosphoryl-undecaprenol N-acetylglucosamine transferase from Porphyromonas gingivalis (strain ATCC BAA-308 / W83).